The primary structure comprises 280 residues: Mastin (280 aa).

The first 15 residues, Met1–Ser15, serve as a signal peptide directing secretion. Positions Val16–Gly30 are excised as a propeptide. The 245-residue stretch at Ile31–Pro275 folds into the Peptidase S1 domain. Cysteines 62 and 78 form a disulfide. His77 acts as the Charge relay system in catalysis. N-linked (GlcNAc...) asparagine glycans are attached at residues Asn106 and Asn117. The active-site Charge relay system is Asp127. Cystine bridges form between Cys161–Cys234, Cys194–Cys215, and Cys224–Cys252. Ser228 acts as the Charge relay system in catalysis.

The protein belongs to the peptidase S1 family. As to quaternary structure, oligomer; disulfide-linked. Post-translationally, N-glycosylated. In terms of tissue distribution, mononuclear cells within skin, intestine, trachea and lung parenchyma, and polymorphonuclear leukocytes within capillaries and blood.

Its subcellular location is the cytoplasm. Its activity is regulated as follows. Inhibited by leupeptin and bis(5-amidino-2-benzimidazolyl)methane (BABIM). In terms of biological role, trypsin-like serine protease. Has a preference for extended substrates with basic residues at the P1 position; Arg is preferred over Lys. Active towards calcitonin gene-related peptide and gelatin. Not active towards substance P, vasoactive intestinal peptide, type I collagen or azocasein. The polypeptide is Mastin (Canis lupus familiaris (Dog)).